Consider the following 352-residue polypeptide: N-acetyl-gamma-glutamyl-phosphate reductase 1 (352 aa).

Belongs to the NAGSA dehydrogenase family. Type 1 subfamily.

It localises to the cytoplasm. The catalysed reaction is N-acetyl-L-glutamate 5-semialdehyde + phosphate + NADP(+) = N-acetyl-L-glutamyl 5-phosphate + NADPH + H(+). It participates in amino-acid biosynthesis; L-arginine biosynthesis; N(2)-acetyl-L-ornithine from L-glutamate: step 3/4. Catalyzes the NADPH-dependent reduction of N-acetyl-5-glutamyl phosphate to yield N-acetyl-L-glutamate 5-semialdehyde. This Nostoc sp. (strain PCC 7120 / SAG 25.82 / UTEX 2576) protein is N-acetyl-gamma-glutamyl-phosphate reductase 1.